Reading from the N-terminus, the 276-residue chain is MSAATFRGYAPAKVNLALHVTGRRVDGYHELDSLVVFAGVGDRLEIAPADALSLTVTGPRAEGVPDDARNLVWKAADWLAPGRGAAMTLDKHLPHAGGIGGGSADAACALRGLAEIWDVDVPDGAEALGADVPVCLHGQPVRMRGIGDVLDAVPPLPPMWIVLVNAGVEVPTGAVFKAMERVDNPPLPAPAWDGFDSFLVWLERTRNDMESSARSQAPVIGMVLERLRALPGCRFTRMSGSGGTCFGLFETEIAARDAALGLPKHWWVTYAPVLRA.

Residue Lys-13 is part of the active site. 94–104 (PHAGGIGGGSA) contacts ATP. Asp-131 is a catalytic residue.

Belongs to the GHMP kinase family. IspE subfamily.

The enzyme catalyses 4-CDP-2-C-methyl-D-erythritol + ATP = 4-CDP-2-C-methyl-D-erythritol 2-phosphate + ADP + H(+). It functions in the pathway isoprenoid biosynthesis; isopentenyl diphosphate biosynthesis via DXP pathway; isopentenyl diphosphate from 1-deoxy-D-xylulose 5-phosphate: step 3/6. Functionally, catalyzes the phosphorylation of the position 2 hydroxy group of 4-diphosphocytidyl-2C-methyl-D-erythritol. This Jannaschia sp. (strain CCS1) protein is 4-diphosphocytidyl-2-C-methyl-D-erythritol kinase.